We begin with the raw amino-acid sequence, 156 residues long: ATP synthase subunit b', chloroplastic (156 aa).

The helical transmembrane segment at 24–44 (ATLPLVAIQFILLMVLLNILL) threads the bilayer.

This sequence belongs to the ATPase B chain family. As to quaternary structure, F-type ATPases have 2 components, F(1) - the catalytic core - and F(0) - the membrane proton channel. F(1) has five subunits: alpha(3), beta(3), gamma(1), delta(1), epsilon(1). F(0) has four main subunits: a(1), b(1), b'(1) and c(10-14). The alpha and beta chains form an alternating ring which encloses part of the gamma chain. F(1) is attached to F(0) by a central stalk formed by the gamma and epsilon chains, while a peripheral stalk is formed by the delta, b and b' chains.

It localises to the plastid. The protein resides in the chloroplast thylakoid membrane. In terms of biological role, f(1)F(0) ATP synthase produces ATP from ADP in the presence of a proton or sodium gradient. F-type ATPases consist of two structural domains, F(1) containing the extramembraneous catalytic core and F(0) containing the membrane proton channel, linked together by a central stalk and a peripheral stalk. During catalysis, ATP synthesis in the catalytic domain of F(1) is coupled via a rotary mechanism of the central stalk subunits to proton translocation. Component of the F(0) channel, it forms part of the peripheral stalk, linking F(1) to F(0). The b'-subunit is a diverged and duplicated form of b found in plants and photosynthetic bacteria. This is ATP synthase subunit b', chloroplastic from Phaeodactylum tricornutum (strain CCAP 1055/1).